A 346-amino-acid polypeptide reads, in one-letter code: Glycerol-3-phosphate dehydrogenase [NAD(P)+] (346 aa).

Positions 15, 16, 36, and 110 each coordinate NADPH. Residues K110, G139, and S141 each coordinate sn-glycerol 3-phosphate. Position 143 (A143) interacts with NADPH. Residues K194, D247, S257, R258, and N259 each contribute to the sn-glycerol 3-phosphate site. K194 serves as the catalytic Proton acceptor. R258 is a binding site for NADPH. NADPH is bound by residues V282 and E284.

It belongs to the NAD-dependent glycerol-3-phosphate dehydrogenase family.

It localises to the cytoplasm. The enzyme catalyses sn-glycerol 3-phosphate + NAD(+) = dihydroxyacetone phosphate + NADH + H(+). The catalysed reaction is sn-glycerol 3-phosphate + NADP(+) = dihydroxyacetone phosphate + NADPH + H(+). It participates in membrane lipid metabolism; glycerophospholipid metabolism. Functionally, catalyzes the reduction of the glycolytic intermediate dihydroxyacetone phosphate (DHAP) to sn-glycerol 3-phosphate (G3P), the key precursor for phospholipid synthesis. This is Glycerol-3-phosphate dehydrogenase [NAD(P)+] from Xylella fastidiosa (strain Temecula1 / ATCC 700964).